We begin with the raw amino-acid sequence, 114 residues long: Large ribosomal subunit protein bL19 (114 aa).

It belongs to the bacterial ribosomal protein bL19 family.

This protein is located at the 30S-50S ribosomal subunit interface and may play a role in the structure and function of the aminoacyl-tRNA binding site. The protein is Large ribosomal subunit protein bL19 of Desulfatibacillum aliphaticivorans.